The chain runs to 1233 residues: Structural maintenance of chromosomes protein 1A (1233 aa).

32-39 (GPNGSGKS) contributes to the ATP binding site. Coiled coils occupy residues 104-124 (EYKI…LEKL) and 163-503 (ELAQ…KAEI). Positions 284-293 (IKEKDSELNQ) are enriched in basic and acidic residues. 2 disordered regions span residues 284–308 (IKEK…TSHK) and 348–369 (QEFE…TLEE). Phosphoserine is present on residues Ser358 and Ser360. The region spanning 515–629 (VYGRLIDLCQ…DNVEDARRIA (115 aa)) is the SMC hinge domain. An N6-acetyllysine mark is found at Lys648 and Lys713. A coiled-coil region spans residues 660-935 (KAKARRWDEK…RHNLLQACKM (276 aa)). Positions 947–966 (MDDISQEEGSSQGEDSVSGS) are disordered. Residues 953-966 (EEGSSQGEDSVSGS) are compositionally biased toward low complexity. Phosphoserine; by ATM is present on Ser957. Residue Ser962 is modified to Phosphoserine. Residue Ser966 is modified to Phosphoserine; by ATM and ATR. Position 970 is a phosphoserine (Ser970). Residues 991–1068 (KDAQAEEEIK…FEQIKKERFD (78 aa)) adopt a coiled-coil conformation. An N6-acetyllysine modification is found at Lys1037.

The protein belongs to the SMC family. SMC1 subfamily. As to quaternary structure, forms a heterodimer with SMC3 in cohesin complexes. Cohesin complexes are composed of the SMC1 (SMC1A or SMC1B) and SMC3 heterodimer attached via their SMC hinge domain, RAD21 which link them, and one STAG protein (STAG1, STAG2 or STAG3), which interacts with RAD21. In germ cell cohesin complexes, SMC1A is mutually exclusive with SMC1B. Interacts with BRCA1. Found in a complex with CDCA5, SMC3 and RAD21, PDS5A/SCC-112 and PDS5B/APRIN. Interacts with NDC80. Interacts with BRAT1. Found in a complex containing POLE and SMC3. Interacts with RPGR, STAG3 and SYCP2. The cohesin complex interacts with the cohesin loading complex subunits NIPBL/Scc2 (via HEAT repeats) and MAU2/Scc4. NIPBL directly contacts all members of the complex, RAD21, SMC1A/B, SMC3 and STAG1. In terms of processing, ubiquitinated by the DCX(DCAF15) complex, leading to its degradation. Phosphorylated by ATM upon ionizing radiation in a NBS1-dependent manner. Phosphorylated by ATR upon DNA methylation in a MSH2/MSH6-dependent manner. Phosphorylation of Ser-957 and Ser-966 activates it and is required for S-phase checkpoint activation.

The protein resides in the nucleus. The protein localises to the chromosome. Its subcellular location is the centromere. It is found in the kinetochore. In terms of biological role, involved in chromosome cohesion during cell cycle and in DNA repair. Central component of cohesin complex. The cohesin complex is required for the cohesion of sister chromatids after DNA replication. The cohesin complex apparently forms a large proteinaceous ring within which sister chromatids can be trapped. At anaphase, the complex is cleaved and dissociates from chromatin, allowing sister chromatids to segregate. The cohesin complex may also play a role in spindle pole assembly during mitosis. Involved in DNA repair via its interaction with BRCA1 and its related phosphorylation by ATM, or via its phosphorylation by ATR. Works as a downstream effector both in the ATM/NBS1 branch and in the ATR/MSH2 branch of S-phase checkpoint. This is Structural maintenance of chromosomes protein 1A (SMC1A) from Homo sapiens (Human).